A 180-amino-acid chain; its full sequence is MIISVSGTPGAGKTTVSKLLSERLGYEYVSVKELALSRGIGERVSDEIEIDVDELARVVREEFSGRNVVLDGHLSHFVPADVVIILRAHPRLIAERLKARGYSKKKLAENVEAELVDVILVEALEENERVLEVDTTGKSPEEVVEEILTLLKSGTKKRVGIVDWSEEYDKVVQYLMLGDD.

ATP contacts are provided by Gly10, Gly12, Lys13, Thr14, and Thr15. Positions 30-50 (SVKELALSRGIGERVSDEIEI) are NMP. The LID stretch occupies residues 99–109 (ARGYSKKKLAE). Residues Arg100 and Lys138 each contribute to the ATP site.

This sequence belongs to the adenylate kinase family. AK6 subfamily. In terms of assembly, interacts with uS11. Not a structural component of 40S pre-ribosomes, but transiently interacts with them by binding to uS11.

It carries out the reaction AMP + ATP = 2 ADP. It catalyses the reaction ATP + H2O = ADP + phosphate + H(+). In terms of biological role, broad-specificity nucleoside monophosphate (NMP) kinase that catalyzes the reversible transfer of the terminal phosphate group between nucleoside triphosphates and monophosphates. Also has ATPase activity. Involved in the late maturation steps of the 30S ribosomal particles, specifically 16S rRNA maturation. While NMP activity is not required for ribosome maturation, ATPase activity is. Associates transiently with small ribosomal subunit protein uS11. ATP hydrolysis breaks the interaction with uS11. May temporarily remove uS11 from the ribosome to enable a conformational change of the ribosomal RNA that is needed for the final maturation step of the small ribosomal subunit. The sequence is that of Putative adenylate kinase from Thermococcus onnurineus (strain NA1).